The following is a 518-amino-acid chain: Chaperonin GroEL (518 aa).

Residues 30–33 (TLGP), Lys51, 87–91 (DGTTT), and Gly415 each bind ATP.

Belongs to the chaperonin (HSP60) family. As to quaternary structure, forms a cylinder of 14 subunits composed of two heptameric rings stacked back-to-back. Interacts with the co-chaperonin GroES.

The protein localises to the cytoplasm. The enzyme catalyses ATP + H2O + a folded polypeptide = ADP + phosphate + an unfolded polypeptide.. Its function is as follows. Together with its co-chaperonin GroES, plays an essential role in assisting protein folding. The GroEL-GroES system forms a nano-cage that allows encapsulation of the non-native substrate proteins and provides a physical environment optimized to promote and accelerate protein folding. This is Chaperonin GroEL from Desulfotalea psychrophila (strain LSv54 / DSM 12343).